We begin with the raw amino-acid sequence, 138 residues long: Basic phospholipase A2 Drk-b1 (138 aa).

Positions 1–16 (MRTLWIVAMCLIGVEG) are cleaved as a signal peptide. 7 disulfide bridges follow: cysteine 42-cysteine 131, cysteine 44-cysteine 60, cysteine 59-cysteine 111, cysteine 65-cysteine 138, cysteine 66-cysteine 104, cysteine 73-cysteine 97, and cysteine 91-cysteine 102. Tyrosine 43, glycine 45, and glycine 47 together coordinate Ca(2+). Histidine 63 is an active-site residue. Aspartate 64 serves as a coordination point for Ca(2+). Aspartate 105 is a catalytic residue.

Requires Ca(2+) as cofactor. As to expression, expressed by the venom gland.

It is found in the secreted. The enzyme catalyses a 1,2-diacyl-sn-glycero-3-phosphocholine + H2O = a 1-acyl-sn-glycero-3-phosphocholine + a fatty acid + H(+). Its function is as follows. Exhibits high hydrolytic activities and shows strong preference for the anionic micelles (dPPC with deoxycholate) to the zwitterionic micelles (dPPC with Triton X-100). PLA2 catalyzes the calcium-dependent hydrolysis of the 2-acyl groups in 3-sn-phosphoglycerides. The polypeptide is Basic phospholipase A2 Drk-b1 (Daboia russelii (Russel's viper)).